Consider the following 330-residue polypeptide: Polyprenal reductase (330 aa).

Over 1–16 (MAGWAGFELSALNPLR) the chain is Cytoplasmic. A helical membrane pass occupies residues 17 to 37 (TLWLALAAAFLFALLLQLAPA). Topologically, residues 38-80 (RLLPSCALFQDLLRYGKTKQSGSRRPAVCRAFDVPKRYFSHFY) are lumenal. Residues 81–101 (VISVVWNGSLLWLLSQSLFLG) traverse the membrane as a helical segment. The Cytoplasmic portion of the chain corresponds to 102-132 (APFPNWLSALLRTLGATQFQALEMESKASRM). A helical membrane pass occupies residues 133–153 (PAAELALSAFLVLVFLWVHSL). The Lumenal portion of the chain corresponds to 154–169 (RRLFECFYVSVFSNAA). A helical transmembrane segment spans residues 170-190 (IHVVQYCFGLVYYVLVGLTVL). At 191 to 206 (SQVPMDDKNVYVLGKN) the chain is on the cytoplasmic side. A helical transmembrane segment spans residues 207–227 (LLIQARWFHILGMVMFFWSSA). Residues 228–277 (HQYKCHVILSNLRRNKKGVVIHCQHRIPFGDWFEYVSSANYLAELMIYIS) are Lumenal-facing. A helical transmembrane segment spans residues 278–298 (MAVTFGLHNLTWWLVVTYVFS). The Cytoplasmic portion of the chain corresponds to 299–330 (SQALSAFFNHKFYRSTFVSYPKHRKAFLPFLF).

It belongs to the steroid 5-alpha reductase family. Polyprenal reductase subfamily.

Its subcellular location is the endoplasmic reticulum membrane. The catalysed reaction is a di-trans,poly-cis-dolichal + NADP(+) = a di-trans,poly-cis-polyprenal + NADPH + H(+). It catalyses the reaction a 3-oxo-5alpha-steroid + NADP(+) = a 3-oxo-Delta(4)-steroid + NADPH + H(+). The enzyme catalyses androst-4-ene-3,17-dione + NADPH + H(+) = 5alpha-androstan-3,17-dione + NADP(+). It carries out the reaction 17beta-hydroxy-5alpha-androstan-3-one + NADP(+) = testosterone + NADPH + H(+). Its pathway is protein modification; protein glycosylation. In terms of biological role, plays a key role in early steps of protein N-linked glycosylation by being involved in the conversion of polyprenol into dolichol. Acts as a polyprenal reductase that mediates the reduction of polyprenal into dolichal in a NADP-dependent mechanism. Dolichols are required for the synthesis of dolichol-linked monosaccharides and the oligosaccharide precursor used for N-glycosylation. Also able to convert testosterone (T) into 5-alpha-dihydrotestosterone (DHT). This chain is Polyprenal reductase, found in Mus musculus (Mouse).